The chain runs to 389 residues: 3-oxo-Delta(4,5)-steroid 5-beta-reductase (389 aa).

NADP(+) is bound by residues 35–37, 63–64, 81–82, Thr-105, and Gln-143; these read TGI, RR, and DI. Residues Lys-147 and Tyr-179 contribute to the active site. NADP(+) contacts are provided by residues Tyr-179, Ile-206, and 213–215; that span reads SMM.

The protein belongs to the short-chain dehydrogenases/reductases (SDR) family. Highly divergent. As to quaternary structure, homodimer.

The enzyme catalyses 5beta-cholestan-3-one + NADP(+) = cholest-4-en-3-one + NADPH + H(+). It catalyses the reaction 4,5beta-dihydrocortisone + NADP(+) = cortisone + NADPH + H(+). Functionally, involved in cardenolide biosynthesis. Catalyzes the stereospecific conversion of progesterone to 5-beta-pregnane-3,20-dione. Can use progesterone, testosterone, 4-androstene-3,17-dione, cortisol and cortisone as substrates, but not pregnenolone, 21-OH-pregnenolone or isoprogesterone. NADPH could not be replaced by NADH. The sequence is that of 3-oxo-Delta(4,5)-steroid 5-beta-reductase from Digitalis lanata (Grecian foxglove).